The sequence spans 546 residues: Chaperonin GroEL (546 aa).

ATP contacts are provided by residues 29 to 32 (TMGP), K50, 86 to 90 (DGTTT), G414, and D492.

This sequence belongs to the chaperonin (HSP60) family. In terms of assembly, forms a cylinder of 14 subunits composed of two heptameric rings stacked back-to-back. Interacts with the co-chaperonin GroES.

It localises to the cytoplasm. It catalyses the reaction ATP + H2O + a folded polypeptide = ADP + phosphate + an unfolded polypeptide.. In terms of biological role, together with its co-chaperonin GroES, plays an essential role in assisting protein folding. The GroEL-GroES system forms a nano-cage that allows encapsulation of the non-native substrate proteins and provides a physical environment optimized to promote and accelerate protein folding. This chain is Chaperonin GroEL, found in Helicobacter pylori (strain J99 / ATCC 700824) (Campylobacter pylori J99).